Here is a 202-residue protein sequence, read N- to C-terminus: MNPEYDYLFKLLLIGDSGVGKSCLLLRFADDSYLDSYISTIGVDFKIRTVEQDGKTIKLQIWDTAGQERFRTITSSYYRGAHGIIVTYDVTDLESFNNVKQWLNEIDRYASENVNKLLVGNKNDLTSQKVVSTETAKAFADELGIPFLETSAKNATNVEEAFMAMTAAIKTRMASQPAGGAKPPTVQIRGQPVNQQSGCCSS.

Residues 15-23 (GDSGVGKSC), 33-40 (YLDSYIST), 63-67 (DTAGQ), 121-124 (NKND), and 151-153 (SAK) each bind GTP. An Effector region motif is present at residues 37–45 (YISTIGVDF). The segment at 174–202 (ASQPAGGAKPPTVQIRGQPVNQQSGCCSS) is disordered. Residues 192–202 (PVNQQSGCCSS) are compositionally biased toward polar residues. S-geranylgeranyl cysteine attachment occurs at residues C199 and C200.

It belongs to the small GTPase superfamily. Rab family.

The protein localises to the golgi apparatus. It is found in the trans-Golgi network membrane. Its subcellular location is the golgi apparatus membrane. In terms of biological role, protein transport. Regulator of membrane traffic from the Golgi apparatus towards the endoplasmic reticulum (ER). This chain is Ras-related protein RABD2b (RABD2B), found in Arabidopsis thaliana (Mouse-ear cress).